The primary structure comprises 336 residues: Fructose-1,6-bisphosphatase class 1 (336 aa).

Mg(2+)-binding residues include glutamate 92, aspartate 115, leucine 117, and aspartate 118. Residues 118 to 121 (DGSS), asparagine 211, tyrosine 244, 262 to 264 (YLY), and lysine 274 each bind substrate. Residue glutamate 280 coordinates Mg(2+).

This sequence belongs to the FBPase class 1 family. Homotetramer. Mg(2+) is required as a cofactor.

The protein localises to the cytoplasm. It catalyses the reaction beta-D-fructose 1,6-bisphosphate + H2O = beta-D-fructose 6-phosphate + phosphate. Its pathway is carbohydrate biosynthesis; gluconeogenesis. The chain is Fructose-1,6-bisphosphatase class 1 from Aliivibrio fischeri (strain MJ11) (Vibrio fischeri).